The sequence spans 256 residues: Small ribosomal subunit protein uS2 (256 aa).

It belongs to the universal ribosomal protein uS2 family.

The sequence is that of Small ribosomal subunit protein uS2 from Streptococcus equi subsp. equi (strain 4047).